Here is a 126-residue protein sequence, read N- to C-terminus: 3-aminoacrylate deaminase RutC (126 aa).

This sequence belongs to the RutC family.

It catalyses the reaction (Z)-3-aminoacrylate + H2O + H(+) = 3-oxopropanoate + NH4(+). Its function is as follows. Involved in pyrimidine catabolism. Catalyzes the deamination of 3-aminoacrylate to malonic semialdehyde, a reaction that can also occur spontaneously. RutC may facilitate the reaction and modulate the metabolic fitness, rather than catalyzing essential functions. This Acinetobacter baylyi (strain ATCC 33305 / BD413 / ADP1) protein is 3-aminoacrylate deaminase RutC.